The sequence spans 501 residues: GMP synthase [glutamine-hydrolyzing] (501 aa).

In terms of domain architecture, Glutamine amidotransferase type-1 spans 1–185; it reads MVLVVDYGSQ…LFNVCKLEKN (185 aa). Cys75 functions as the Nucleophile in the catalytic mechanism. Residues His159 and Glu161 contribute to the active site. The 191-residue stretch at 186-376 folds into the GMPS ATP-PPase domain; the sequence is WKIGDLVEEK…LGIPDRIINR (191 aa). 213–219 contacts ATP; the sequence is SGGVDSS.

Homodimer.

It catalyses the reaction XMP + L-glutamine + ATP + H2O = GMP + L-glutamate + AMP + diphosphate + 2 H(+). It participates in purine metabolism; GMP biosynthesis; GMP from XMP (L-Gln route): step 1/1. Its function is as follows. Catalyzes the synthesis of GMP from XMP. The sequence is that of GMP synthase [glutamine-hydrolyzing] (guaA) from Thermotoga maritima (strain ATCC 43589 / DSM 3109 / JCM 10099 / NBRC 100826 / MSB8).